Reading from the N-terminus, the 482-residue chain is ATP synthase subunit beta (482 aa).

161–168 (GGAGVGKT) is an ATP binding site.

Belongs to the ATPase alpha/beta chains family. In terms of assembly, F-type ATPases have 2 components, CF(1) - the catalytic core - and CF(0) - the membrane proton channel. CF(1) has five subunits: alpha(3), beta(3), gamma(1), delta(1), epsilon(1). CF(0) has three main subunits: a(1), b(2) and c(9-12). The alpha and beta chains form an alternating ring which encloses part of the gamma chain. CF(1) is attached to CF(0) by a central stalk formed by the gamma and epsilon chains, while a peripheral stalk is formed by the delta and b chains.

The protein localises to the cell inner membrane. It catalyses the reaction ATP + H2O + 4 H(+)(in) = ADP + phosphate + 5 H(+)(out). Its function is as follows. Produces ATP from ADP in the presence of a proton gradient across the membrane. The catalytic sites are hosted primarily by the beta subunits. This chain is ATP synthase subunit beta, found in Solibacter usitatus (strain Ellin6076).